The following is a 262-amino-acid chain: Indole-3-glycerol phosphate synthase (262 aa).

The protein belongs to the TrpC family.

It carries out the reaction 1-(2-carboxyphenylamino)-1-deoxy-D-ribulose 5-phosphate + H(+) = (1S,2R)-1-C-(indol-3-yl)glycerol 3-phosphate + CO2 + H2O. Its pathway is amino-acid biosynthesis; L-tryptophan biosynthesis; L-tryptophan from chorismate: step 4/5. In Staphylococcus epidermidis (strain ATCC 35984 / DSM 28319 / BCRC 17069 / CCUG 31568 / BM 3577 / RP62A), this protein is Indole-3-glycerol phosphate synthase.